A 186-amino-acid chain; its full sequence is MSLREITQKAEAKMKKSVESFQHEIAAIRTGKATTALLDHVKVDAYGQTMPLKQIGNVGVQDAHTLMVQVWDKSMVAATEKAIRDANLGLNPVAEGQSIRVSIPPLNEERRKEYVKLTKKYGEDAKIALRNLRREMLHGADKLEKDKEIGEDAKANCKKDADNLVHKYEKQISDMIVQKEKEIMEV.

It belongs to the RRF family.

It is found in the cytoplasm. In terms of biological role, responsible for the release of ribosomes from messenger RNA at the termination of protein biosynthesis. May increase the efficiency of translation by recycling ribosomes from one round of translation to another. This Chlorobium phaeobacteroides (strain BS1) protein is Ribosome-recycling factor.